A 751-amino-acid polypeptide reads, in one-letter code: Serine/threonine-protein kinase B-raf (751 aa).

The segment covering 1 to 32 (MAALSGGGGSSSGGGGGGGGGGGGGDGGGGAE) has biased composition (gly residues). The interval 1 to 55 (MAALSGGGGSSSGGGGGGGGGGGGGDGGGGAEQGQALFNGDMEPEAGAGAAASSA) is disordered. An N-acetylalanine modification is found at alanine 2. Residues 46–55 (AGAGAAASSA) show a composition bias toward low complexity. Serine 135 carries the phosphoserine modification. One can recognise an RBD domain in the interval 139-211 (PIVRVFLPNK…TGEELHVEVL (73 aa)). Zn(2+)-binding residues include histidine 219, cysteine 232, cysteine 235, cysteine 245, cysteine 248, histidine 253, cysteine 256, and cysteine 264. Positions 288 to 440 (EASFPETALP…SSDDWEIPDG (153 aa)) are disordered. Over residues 297-324 (PSGSSSAPPSDSTGPQILTSPSPSKSIP) the composition is skewed to low complexity. A Phosphoserine modification is found at serine 316. Positions 331 to 346 (PADEDHRNQFGQRDRS) are enriched in basic and acidic residues. Serine 348 is modified (phosphoserine). Threonine 356 is subject to Phosphothreonine; by autocatalysis. The residue at position 379 (threonine 379) is a Phosphothreonine. A Phosphoserine modification is found at serine 382. Threonine 384 carries the post-translational modification Phosphothreonine. Residues 406–432 (QRERKSSSSSSSEDRSRMKTLGRRDSS) show a composition bias toward basic and acidic residues. Residues serine 431 and serine 432 each carry the phosphoserine modification. The 261-residue stretch at 442-702 (ITVGQRIGSG…PQILASIELL (261 aa)) folds into the Protein kinase domain. ATP is bound by residues 448-456 (IGSGSFGTV) and lysine 468. Residue aspartate 561 is the Proton acceptor of the active site. Lysine 563 participates in a covalent cross-link: Glycyl lysine isopeptide (Lys-Gly) (interchain with G-Cter in ubiquitin). Arginine 656 is modified (omega-N-methylarginine; by PRMT5). Phosphoserine occurs at positions 714 and 735. A Phosphothreonine; by MAPK1 modification is found at threonine 738.

Belongs to the protein kinase superfamily. TKL Ser/Thr protein kinase family. RAF subfamily. In terms of assembly, monomer. Homodimer. Heterodimerizes with RAF1, and the heterodimer possesses a highly increased kinase activity compared to the respective homodimers or monomers. Heterodimerization is mitogen-regulated and enhanced by 14-3-3 proteins. MAPK1/ERK2 activation can induce a negative feedback that promotes the dissociation of the heterodimer by phosphorylating BRAF at Thr-738. Heterodimerizes (via N-terminus) with KSR1 (via N-terminus) or KSR2 (via N-terminus) in a MAP2K1-dependent manner. Interacts with MAP2K1 and MAP2K2. Found in a complex with at least BRAF, HRAS, MAP2K1, MAPK3 and RGS14. Interacts with RIT1. Interacts (via N-terminus) with RGS14 (via RBD domains); the interaction mediates the formation of a ternary complex with RAF1, a ternary complex inhibited by GNAI1. Interacts with DGKH. Interacts with PRMT5. Interacts with AKAP13, MAP2K1 and KSR1. Identified in a complex with AKAP13, KSR1 and MAP2K1. Interacts with FNIP1 and FNIP2. Zn(2+) serves as cofactor. Post-translationally, phosphorylation at Ser-348 by SGK1 inhibits its activity. Dephosphorylation of Ser-348 by the SHOC2-MRAS-PP1c (SMP) complex consisting of SHOC2, GTP-bound M-Ras/MRAS and the catalytic subunit of protein phosphatase 1 (PPP1CA, PPP1CB or PPP1CC); this relieves inactivation and stimulates kinase activity. In terms of processing, methylation by PRMT5 decreases stability and kinase activity. Ubiquitinated by RNF149; which leads to proteasomal degradation. Polyubiquitinated at Lys-615 in response to EGF.

The protein localises to the nucleus. The protein resides in the cytoplasm. Its subcellular location is the cell membrane. It carries out the reaction L-seryl-[protein] + ATP = O-phospho-L-seryl-[protein] + ADP + H(+). The enzyme catalyses L-threonyl-[protein] + ATP = O-phospho-L-threonyl-[protein] + ADP + H(+). With respect to regulation, in quiescent cells, maintained in an inactive state via an intramolecular interaction between the protein kinase and N-terminal domains. Following mitogen-mediated cell activation, binds via its RGB domain to active HRAS (GTP-bound) which releases the inhibitory intramolecular interaction between the two domains. This allows the MAP2K1-mediated dimerization of KSR1 or KSR2, and BRAF which activates BRAF. Involved in the transduction of mitogenic signals from the cell membrane to the nucleus. Phosphorylates MAP2K1, and thereby activates the MAP kinase signal transduction pathway. Phosphorylates PFKFB2. May play a role in the postsynaptic responses of hippocampal neurons. The chain is Serine/threonine-protein kinase B-raf from Mus musculus (Mouse).